The sequence spans 311 residues: Cytosolic Fe-S cluster assembly factor Nubp1 homolog (311 aa).

4 residues coordinate [4Fe-4S] cluster: Cys9, Cys23, Cys26, and Cys32. Position 63-70 (63-70 (GKGGVGKS)) interacts with ATP. [4Fe-4S] cluster contacts are provided by Cys240 and Cys243.

It belongs to the Mrp/NBP35 ATP-binding proteins family. NUBP1/NBP35 subfamily. Heterotetramer of 2 Nubp1 and 2 Nubp2 chains. [4Fe-4S] cluster is required as a cofactor.

Its subcellular location is the cytoplasm. Functionally, component of the cytosolic iron-sulfur (Fe/S) protein assembly (CIA) machinery. Required for maturation of extramitochondrial Fe-S proteins. The Nubp1-Nubp2 heterotetramer forms a Fe-S scaffold complex, mediating the de novo assembly of an Fe-S cluster and its transfer to target apoproteins. The sequence is that of Cytosolic Fe-S cluster assembly factor Nubp1 homolog from Drosophila yakuba (Fruit fly).